Reading from the N-terminus, the 808-residue chain is Putative dimethyl sulfoxide reductase chain YnfE (808 aa).

The tat-type signal signal peptide spans 1–43; the sequence is MSKNERMVGISRRTLVKSTAIGSLALAAGGFSLPFTLRNAAAA. One can recognise a 4Fe-4S Mo/W bis-MGD-type domain in the interval 49-110; sequence EKVVWGACSV…SIRRRINHPD (62 aa). [4Fe-4S] cluster contacts are provided by Cys56, Cys60, Cys64, and Cys96. Ser196 is a Mo-bis(molybdopterin guanine dinucleotide) binding site.

This sequence belongs to the prokaryotic molybdopterin-containing oxidoreductase family. The cofactor is [4Fe-4S] cluster. Mo-bis(molybdopterin guanine dinucleotide) is required as a cofactor. Exported by the Tat system. The position of the signal peptide cleavage has not been experimentally proven.

It localises to the cell membrane. Functionally, terminal reductase during anaerobic growth on various sulfoxide and N-oxide compounds. The protein is Putative dimethyl sulfoxide reductase chain YnfE (ynfE) of Escherichia coli (strain K12).